We begin with the raw amino-acid sequence, 37 residues long: Cytochrome b6-f complex subunit 5 (37 aa).

A helical membrane pass occupies residues 5 to 25 (LLSGIVLGLITVSALGLFVAA).

The protein belongs to the PetG family. In terms of assembly, the 4 large subunits of the cytochrome b6-f complex are cytochrome b6, subunit IV (17 kDa polypeptide, PetD), cytochrome f and the Rieske protein, while the 4 small subunits are PetG, PetL, PetM and PetN. The complex functions as a dimer.

The protein resides in the plastid. The protein localises to the chloroplast thylakoid membrane. In terms of biological role, component of the cytochrome b6-f complex, which mediates electron transfer between photosystem II (PSII) and photosystem I (PSI), cyclic electron flow around PSI, and state transitions. PetG is required for either the stability or assembly of the cytochrome b6-f complex. This is Cytochrome b6-f complex subunit 5 from Phaeodactylum tricornutum (strain CCAP 1055/1).